Reading from the N-terminus, the 184-residue chain is uncharacterized protein (184 aa).

This is an uncharacterized protein from Chlamydia pneumoniae (Chlamydophila pneumoniae).